Consider the following 448-residue polypeptide: N-succinylarginine dihydrolase (448 aa).

Substrate contacts are provided by residues 19–28, Asn-110, and 137–138; these read GGLSYGNVAS and HR. The active site involves Glu-174. A substrate-binding site is contributed by Arg-214. His-250 is an active-site residue. Residues Asp-252 and Asn-365 each contribute to the substrate site. The active-site Nucleophile is Cys-371.

Belongs to the succinylarginine dihydrolase family. Homodimer.

It catalyses the reaction N(2)-succinyl-L-arginine + 2 H2O + 2 H(+) = N(2)-succinyl-L-ornithine + 2 NH4(+) + CO2. It participates in amino-acid degradation; L-arginine degradation via AST pathway; L-glutamate and succinate from L-arginine: step 2/5. Catalyzes the hydrolysis of N(2)-succinylarginine into N(2)-succinylornithine, ammonia and CO(2). The polypeptide is N-succinylarginine dihydrolase (Pseudomonas paraeruginosa (strain DSM 24068 / PA7) (Pseudomonas aeruginosa (strain PA7))).